The following is a 734-amino-acid chain: Photosystem I P700 chlorophyll a apoprotein A2 (734 aa).

A run of 8 helical transmembrane segments spans residues 46–69, 135–158, 175–199, 273–291, 330–353, 369–395, 417–439, and 517–535; these read IFAS…FHVA, LYTG…LHLQ, LNHH…HVAI, MAHH…GHMY, LHFQ…QHMY, AALY…IFFI, AIIS…LYVH, and FLVH…LILV. Cys-559 and Cys-568 together coordinate [4Fe-4S] cluster. The next 2 membrane-spanning stretches (helical) occupy residues 575–596 and 643–665; these read AFYL…YWHW and LSVW…MFLI. Chlorophyll a contacts are provided by His-654, Met-662, and Tyr-670. Trp-671 serves as a coordination point for phylloquinone. Residues 707-727 traverse the membrane as a helical segment; that stretch reads LVGLAHFSVGYIFTYAAFLIA.

It belongs to the PsaA/PsaB family. In terms of assembly, the PsaA/B heterodimer binds the P700 chlorophyll special pair and subsequent electron acceptors. PSI consists of a core antenna complex that captures photons, and an electron transfer chain that converts photonic excitation into a charge separation. The eukaryotic PSI reaction center is composed of at least 11 subunits. Requires P700 is a chlorophyll a/chlorophyll a' dimer, A0 is one or more chlorophyll a, A1 is one or both phylloquinones and FX is a shared 4Fe-4S iron-sulfur center. as cofactor.

The protein localises to the plastid. The protein resides in the chloroplast thylakoid membrane. The enzyme catalyses reduced [plastocyanin] + hnu + oxidized [2Fe-2S]-[ferredoxin] = oxidized [plastocyanin] + reduced [2Fe-2S]-[ferredoxin]. In terms of biological role, psaA and PsaB bind P700, the primary electron donor of photosystem I (PSI), as well as the electron acceptors A0, A1 and FX. PSI is a plastocyanin-ferredoxin oxidoreductase, converting photonic excitation into a charge separation, which transfers an electron from the donor P700 chlorophyll pair to the spectroscopically characterized acceptors A0, A1, FX, FA and FB in turn. Oxidized P700 is reduced on the lumenal side of the thylakoid membrane by plastocyanin. This chain is Photosystem I P700 chlorophyll a apoprotein A2, found in Daucus carota (Wild carrot).